The primary structure comprises 182 residues: MYKKLITFLFVIGAVASYSNNEYTPFNKLSVKLYIDGVDNIENSYTDDNNELVLNFKEYTISIITESCDVGFDSIDIDVINDYKIIDMYTIDSSTIQRRGHTCRISTKLSCHYDKYPYIHKYEGDERQYSITAEGKCYKGIKYEISMMNDDTLLRKHTLKIGFTYIFDRHGHSNTYYSKYDF.

The protein belongs to the orthopoxvirus OPG192 family.

It is found in the host endoplasmic reticulum. This chain is Protein OPG192 (OPG192), found in Cynomys gunnisoni (Gunnison's prairie dog).